Here is a 359-residue protein sequence, read N- to C-terminus: 1-deoxy-D-xylulose 5-phosphate reductoisomerase (359 aa).

NADPH-binding residues include threonine 12, glycine 13, serine 14, isoleucine 15, lysine 38, and asparagine 39. Lysine 105 contributes to the 1-deoxy-D-xylulose 5-phosphate binding site. Glutamate 106 lines the NADPH pocket. Residue aspartate 130 coordinates Mn(2+). Residues serine 131, glutamate 132, serine 152, and histidine 175 each contribute to the 1-deoxy-D-xylulose 5-phosphate site. A Mn(2+)-binding site is contributed by glutamate 132. Glycine 181 is an NADPH binding site. Residues serine 188, asparagine 193, lysine 194, and glutamate 197 each contribute to the 1-deoxy-D-xylulose 5-phosphate site. Glutamate 197 is a binding site for Mn(2+).

It belongs to the DXR family. Mg(2+) is required as a cofactor. It depends on Mn(2+) as a cofactor.

It carries out the reaction 2-C-methyl-D-erythritol 4-phosphate + NADP(+) = 1-deoxy-D-xylulose 5-phosphate + NADPH + H(+). It functions in the pathway isoprenoid biosynthesis; isopentenyl diphosphate biosynthesis via DXP pathway; isopentenyl diphosphate from 1-deoxy-D-xylulose 5-phosphate: step 1/6. In terms of biological role, catalyzes the NADPH-dependent rearrangement and reduction of 1-deoxy-D-xylulose-5-phosphate (DXP) to 2-C-methyl-D-erythritol 4-phosphate (MEP). The protein is 1-deoxy-D-xylulose 5-phosphate reductoisomerase of Pseudothermotoga lettingae (strain ATCC BAA-301 / DSM 14385 / NBRC 107922 / TMO) (Thermotoga lettingae).